We begin with the raw amino-acid sequence, 1023 residues long: Sodium/potassium-transporting ATPase subunit alpha-1 (1023 aa).

A propeptide spanning residues 1-5 is cleaved from the precursor; that stretch reads MGKGV. A compositionally biased stretch (basic and acidic residues) spans 1 to 11; sequence MGKGVGRDKYE. The segment at 1–38 is disordered; sequence MGKGVGRDKYEPAAVSEHGDKKSKKAKKERDMDELKKE. The Cytoplasmic portion of the chain corresponds to 6-87; it reads GRDKYEPAAV…NALTPPPTTP (82 aa). Lysine 9 is subject to N6-acetyllysine. Tyrosine 10 is subject to Phosphotyrosine. Serine 16 is subject to Phosphoserine; by PKC. The residue at position 21 (lysine 21) is an N6-acetyllysine. Residue serine 23 is modified to Phosphoserine; by PKC. The span at 28-38 shows a compositional bias: basic and acidic residues; the sequence is KERDMDELKKE. 2 positions are modified to phosphoserine: serine 40 and serine 47. The phosphoinositide-3 kinase binding stretch occupies residues 82-84; sequence PPP. The chain crosses the membrane as a helical span at residues 88 to 108; the sequence is EWVKFCRQLFGGFSMLLWIGA. Residues 109-131 lie on the Extracellular side of the membrane; the sequence is ILCFLAYGIRSATEEEPPNDDLY. The chain crosses the membrane as a helical span at residues 132–152; the sequence is LGVVLSAVVIITGCFSYYQEA. Residues 153–288 are Cytoplasmic-facing; the sequence is KSSKIMESFK…GGQTPIAEEI (136 aa). The interval 216 to 235 is disordered; it reads SSLTGESEPQTRSPDFTNEN. Phosphoserine is present on serine 228. Tyrosine 260 is modified (phosphotyrosine). A helical membrane pass occupies residues 289–308; the sequence is EHFIHLITGVAVFLGVSFFI. Residues 309–320 lie on the Extracellular side of the membrane; the sequence is LSLILEYTWLEA. The helical transmembrane segment at 321 to 338 threads the bilayer; it reads VIFLIGIIVANVPEGLLA. The Cytoplasmic portion of the chain corresponds to 339–772; the sequence is TVTVCLTLTA…EEGRLIFDNL (434 aa). Aspartate 376 (4-aspartylphosphate intermediate) is an active-site residue. A phosphoserine mark is found at serine 452 and serine 484. Lysine 487 contributes to the ATP binding site. Tyrosine 542 is subject to Phosphotyrosine. The tract at residues 596-717 is mediates interaction with SCN7A; it reads RAAVPDAVGK…QGAIVAVTGD (122 aa). Lysine 661 is modified (N6-succinyllysine). Serine 668 and serine 675 each carry phosphoserine. Mg(2+) is bound by residues aspartate 717 and aspartate 721. A helical transmembrane segment spans residues 773–792; the sequence is KKSIAYTLTSNIPEITPFLI. Topologically, residues 793–802 are extracellular; that stretch reads FIIANIPLPL. The chain crosses the membrane as a helical span at residues 803-823; it reads GTVTILCIDLGTDMVPAISLA. Residues 824 to 843 lie on the Cytoplasmic side of the membrane; the sequence is YEQAESDIMKRQPRNPKTDK. The chain crosses the membrane as a helical span at residues 844 to 866; that stretch reads LVNERLISMAYGQIGMIQALGGF. Topologically, residues 867–918 are extracellular; sequence FTYFVILAENGFLPFHLLGIRETWDDRWINDVEDSYGQQWTYEQRKIVEFTC. A helical membrane pass occupies residues 919–938; that stretch reads HTAFFVSIVVVQWADLVICK. Over 939–951 the chain is Cytoplasmic; sequence TRRNSVFQQGMKN. A Phosphoserine; by PKA modification is found at serine 943. Residues 952 to 970 form a helical membrane-spanning segment; that stretch reads KILIFGLFEETALAAFLSY. Over 971–985 the chain is Extracellular; sequence CPGMGAALRMYPLKP. The helical transmembrane segment at 986-1006 threads the bilayer; sequence TWWFCAFPYSLLIFVYDEVRK. Residues 1007-1023 lie on the Cytoplasmic side of the membrane; the sequence is LIIRRRPGGWVEKETYY.

Belongs to the cation transport ATPase (P-type) (TC 3.A.3) family. Type IIC subfamily. In terms of assembly, the sodium/potassium-transporting ATPase is composed of a catalytic alpha subunit, an auxiliary non-catalytic beta subunit and an additional regulatory subunit. Interacts with regulatory subunit FXYD1. Interacts with regulatory subunit FXYD3. Interacts with SLC35G1 and STIM1. Interacts with SIK1. Interacts with CLN3; this interaction regulates the sodium/potassium-transporting ATPase complex localization at the plasma membrane. Interacts with SCN7A; activates ATP1A1 P-type sodium:potassium-exchanging transporter activity which indirectly signals to nearby neurons to regulate sodium homeostasis. In terms of processing, phosphorylation on Tyr-10 modulates pumping activity. Phosphorylation of Ser-943 by PKA modulates the response of ATP1A1 to PKC. Dephosphorylation by protein phosphatase 2A (PP2A) following increases in intracellular sodium, leading to increase catalytic activity. As to expression, expressed in the central nervous system, in most motor and sensory axons of the ventral and dorsal roots, as well as in the large motor neurons of the ventral horn (at protein level).

The protein localises to the cell membrane. Its subcellular location is the basolateral cell membrane. It localises to the sarcolemma. It is found in the cell projection. The protein resides in the axon. The protein localises to the melanosome. The enzyme catalyses K(+)(out) + Na(+)(in) + ATP + H2O = K(+)(in) + Na(+)(out) + ADP + phosphate + H(+). In terms of biological role, this is the catalytic component of the active enzyme, which catalyzes the hydrolysis of ATP coupled with the exchange of sodium and potassium ions across the plasma membrane. This action creates the electrochemical gradient of sodium and potassium ions, providing the energy for active transport of various nutrients. Could also be part of an osmosensory signaling pathway that senses body-fluid sodium levels and controls salt intake behavior as well as voluntary water intake to regulate sodium homeostasis. The sequence is that of Sodium/potassium-transporting ATPase subunit alpha-1 (Atp1a1) from Rattus norvegicus (Rat).